The sequence spans 123 residues: Small ribosomal subunit protein uS12 (123 aa).

Aspartate 89 is modified (3-methylthioaspartic acid). The interval 101 to 123 is disordered; sequence SLDTSGVKDRKQGRSKYGAKRPK. Residues 113–123 are compositionally biased toward basic residues; the sequence is GRSKYGAKRPK.

The protein belongs to the universal ribosomal protein uS12 family. In terms of assembly, part of the 30S ribosomal subunit. Contacts proteins S8 and S17. May interact with IF1 in the 30S initiation complex.

With S4 and S5 plays an important role in translational accuracy. In terms of biological role, interacts with and stabilizes bases of the 16S rRNA that are involved in tRNA selection in the A site and with the mRNA backbone. Located at the interface of the 30S and 50S subunits, it traverses the body of the 30S subunit contacting proteins on the other side and probably holding the rRNA structure together. The combined cluster of proteins S8, S12 and S17 appears to hold together the shoulder and platform of the 30S subunit. The polypeptide is Small ribosomal subunit protein uS12 (Azotobacter vinelandii (strain DJ / ATCC BAA-1303)).